Here is a 296-residue protein sequence, read N- to C-terminus: MKFQDMILSLNQFWGEQGCIIAQPYDMEKGAGTFNPNTFLRALGPEPWKVAYIEPSRRPTDGRYGENPNRLQHYFQYQVIIKPSPDNIQELYLQSLERLGVNPKEHDIRFVEDNWESPTLGAWGLGWEVWLDGMEVTQFTYFQQCGGIDCKPVCAEITYGLERLAMYIQNKESVYDIEYVGDITYGDIYLQNEIDYSHYNFEAADVEALQTWFEMYEKEAIRIVEKGLVLPAYDYVLKCSHTFNLLDARGAISVTERTGYIARVRNLARLCAQAYVEQRERLGYPLLKEQSGKEAE.

Belongs to the class-II aminoacyl-tRNA synthetase family. In terms of assembly, tetramer of two alpha and two beta subunits.

The protein localises to the cytoplasm. The catalysed reaction is tRNA(Gly) + glycine + ATP = glycyl-tRNA(Gly) + AMP + diphosphate. In Desulfitobacterium hafniense (strain DSM 10664 / DCB-2), this protein is Glycine--tRNA ligase alpha subunit.